The sequence spans 378 residues: MLTSIRHNYRLSAIITPTTAAQADTLNAGPSFGDFVAPDAPLSPAEAYEIKTVQVGPEGRKKTITRLPEWLKTPIPSNANYKKIKKDLRGLNLHTVCEEAKCPNISDCWGGSDKSAATATIMLGGDTCTRGCRFCSVKTSKAPPPLDPHEPENTAEALSRWGLGYVVLTIVDRDDLADGGARHAMETIMKIKQKAPSMLVEALVGDYAGDAEMVKLVANSGLDVFAHNVETTEALTPYVRDRRANFKQSLNVLRIAKETKPELITKTSIMLGLGETEDELWKALKDLRANDVDVVTFGQYMRPTKKHMAVHEYVTPDVFEMWRQRALDMGFLYCASGPLVRSSYKAGEAFIENVIKKRRMGRGGQVGGAQIAEMEKSA.

7 residues coordinate [4Fe-4S] cluster: C97, C102, C108, C128, C132, C135, and S343. Residues 111-332 (GSDKSAATAT…RQRALDMGFL (222 aa)) form the Radical SAM core domain.

Belongs to the radical SAM superfamily. Lipoyl synthase family. [4Fe-4S] cluster serves as cofactor.

The protein localises to the mitochondrion. It carries out the reaction [[Fe-S] cluster scaffold protein carrying a second [4Fe-4S](2+) cluster] + N(6)-octanoyl-L-lysyl-[protein] + 2 oxidized [2Fe-2S]-[ferredoxin] + 2 S-adenosyl-L-methionine + 4 H(+) = [[Fe-S] cluster scaffold protein] + N(6)-[(R)-dihydrolipoyl]-L-lysyl-[protein] + 4 Fe(3+) + 2 hydrogen sulfide + 2 5'-deoxyadenosine + 2 L-methionine + 2 reduced [2Fe-2S]-[ferredoxin]. The protein operates within protein modification; protein lipoylation via endogenous pathway; protein N(6)-(lipoyl)lysine from octanoyl-[acyl-carrier-protein]: step 2/2. Its function is as follows. Catalyzes the radical-mediated insertion of two sulfur atoms into the C-6 and C-8 positions of the octanoyl moiety bound to the lipoyl domains of lipoate-dependent enzymes, thereby converting the octanoylated domains into lipoylated derivatives. The protein is Lipoyl synthase, mitochondrial of Phaeosphaeria nodorum (strain SN15 / ATCC MYA-4574 / FGSC 10173) (Glume blotch fungus).